A 214-amino-acid chain; its full sequence is Metalloproteinase inhibitor 3 (214 aa).

The signal sequence occupies residues 1–26 (MVFSTTAALSLLLALSSMQLSEVSEA). Cys27 lines the Zn(2+) pocket. Involved in metalloproteinase-binding stretches follow at residues 27 to 30 (CTCM) and 91 to 92 (ES). 6 cysteine pairs are disulfide-bonded: Cys27–Cys94, Cys29–Cys121, Cys39–Cys146, Cys148–Cys195, Cys153–Cys158, and Cys166–Cys187. The NTR domain maps to 27–146 (CTCMPNHPQE…GLNHRYQYGC (120 aa)). The N-linked (GlcNAc...) asparagine glycan is linked to Asn210.

Belongs to the protease inhibitor I35 (TIMP) family. In terms of tissue distribution, expressed abundantly in brain and cartilage.

It is found in the secreted. It localises to the extracellular space. Its subcellular location is the extracellular matrix. Functionally, complexes with metalloproteinases (such as collagenases) and irreversibly inactivates them by binding to their catalytic zinc cofactor. May form part of a tissue-specific acute response to remodeling stimuli. The polypeptide is Metalloproteinase inhibitor 3 (TIMP3) (Scyliorhinus torazame (Cloudy catshark)).